Reading from the N-terminus, the 26-residue chain is uncharacterized protein (26 aa).

This sequence belongs to the asfivirus E66L family.

This is an uncharacterized protein from Ornithodoros (relapsing fever ticks).